A 360-amino-acid chain; its full sequence is Protein Wnt-2 (360 aa).

The first 26 residues, 1–26 (MNAPLGGIWLWLPLLLTWLTPEVSSS), serve as a signal peptide directing secretion. Disulfide bonds link cysteine 76-cysteine 87, cysteine 127-cysteine 135, cysteine 137-cysteine 157, cysteine 206-cysteine 220, cysteine 208-cysteine 215, cysteine 278-cysteine 309, cysteine 294-cysteine 304, cysteine 308-cysteine 348, cysteine 324-cysteine 339, cysteine 326-cysteine 336, and cysteine 331-cysteine 332. The O-palmitoleoyl serine; by PORCN moiety is linked to residue serine 212. Residue asparagine 295 is glycosylated (N-linked (GlcNAc...) asparagine).

The protein belongs to the Wnt family. In terms of processing, palmitoleoylation is required for efficient binding to frizzled receptors. Depalmitoleoylation leads to Wnt signaling pathway inhibition.

It localises to the secreted. The protein resides in the extracellular space. Its subcellular location is the extracellular matrix. Its function is as follows. Ligand for members of the frizzled family of seven transmembrane receptors. Probable developmental protein. May be a signaling molecule which affects the development of discrete regions of tissues. Is likely to signal over only few cell diameters. The chain is Protein Wnt-2 (WNT2) from Eulemur macaco macaco (Black lemur).